The chain runs to 70 residues: DNA-directed RNA polymerase subunit epsilon (70 aa).

This sequence belongs to the RNA polymerase subunit epsilon family. RNAP is composed of a core of 2 alpha, a beta and a beta' subunit. The core is associated with a delta subunit, and at least one of epsilon or omega. When a sigma factor is associated with the core the holoenzyme is formed, which can initiate transcription.

The enzyme catalyses RNA(n) + a ribonucleoside 5'-triphosphate = RNA(n+1) + diphosphate. In terms of biological role, a non-essential component of RNA polymerase (RNAP). The sequence is that of DNA-directed RNA polymerase subunit epsilon from Bacillus cereus (strain ZK / E33L).